We begin with the raw amino-acid sequence, 810 residues long: MAQHLLHGTLHATIYEVDDLHTGGLRSGFFGKILANVEETIGVGKGETQLYATIDLQRARVGRTRKIKDEAKNPKWYESFHIYCAHLASDIIFTVKDDNPIGATLIGRAYVPVDQVIHGEEVDQWVEILDNDRNPIHGGSKIHVKLQYFGVEADRNWNQGIKSAKFPGVPYTFFSQRQGCKVSLYQDAHIPDNFVPRIPLAGGKNYEPQRCWEDIFDAISNAQHMIYITGWSVYTEIALVRDSRRPKPGGDVTVGELLKKKASEGVRVLLLVWDDRTSVDVLKKDGLMATHDEETENFFRGSDVHCILCPRNPDDGGSIVQNLQVSAMFTHHQKIVVVDSEMPSRGGSQMRRIVSFVGGIDLCDGRYDTPFHSLFRTLDTVHHDDFHQPNFTGAAITKGGPREPWHDIHSRLEGPIAWDVLYNFEQRWSKQGGKDILVKLRELSDIIITPSPVMFQEDHDVWNVQLFRSIDGGAAAGFPESPEAAAEAGLVSGKDNIIDRSIQDAYIHAIRRAKDFIYIENQYFLGSSFAWAADGITPEDINALHLIPKELSLKIVSKIEKGEKFRVYVVVPMWPEGLPESASVQAILDWQRRTMQMMYKDIVQALRAQGLEEDPRNYLTFFCLGNREVKKEGEYEPAERPDADSSYMKAQEARRFMIYVHTKMMIVDDEYIIIGSANINQRSMDGARDSEIAMGGYQPHHLSHRQPARGQIHGFRMSLWYEHLGMLDETFLDPSSVECIEKVNRISDKYWDLYSSESLEHDLPGHLLRYPVDVDGEGDVTEFPGFEFFPDTKARILGTKSDYLPPILTT.

The propeptide occupies 1–36; sequence MAQHLLHGTLHATIYEVDDLHTGGLRSGFFGKILAN. A C2 domain is found at 1–126; sequence MAQHLLHGTL…IHGEEVDQWV (126 aa). Aspartate 187 serves as a coordination point for Ca(2+). The PLD phosphodiesterase 1 domain maps to 327-366; it reads AMFTHHQKIVVVDSEMPSRGGSQMRRIVSFVGGIDLCDGR. Active-site residues include histidine 332, lysine 334, and aspartate 339. Residue histidine 332 coordinates a 1,2-diacyl-sn-glycero-3-phosphate. Histidine 372 and histidine 406 together coordinate Ca(2+). The a 1,2-diacyl-sn-glycero-3-phosphate site is built by glutamine 522 and histidine 661. Residues 656–683 enclose the PLD phosphodiesterase 2 domain; it reads FMIYVHTKMMIVDDEYIIIGSANINQRS. Residues histidine 661, lysine 663, and aspartate 668 contribute to the active site. Glutamate 722 is a Ca(2+) binding site.

It belongs to the phospholipase D family. C2-PLD subfamily. The cofactor is Ca(2+).

Its subcellular location is the cytoplasm. It is found in the membrane. The enzyme catalyses a 1,2-diacyl-sn-glycero-3-phosphocholine + H2O = a 1,2-diacyl-sn-glycero-3-phosphate + choline + H(+). Hydrolyzes glycerol-phospholipids at the terminal phosphodiesteric bond. Plays an important role in various cellular processes, including phytohormone action, vesicular trafficking, secretion, cytoskeletal arrangement, meiosis, tumor promotion, pathogenesis, membrane deterioration and senescence. The chain is Phospholipase D alpha 1 (PLD1) from Brassica oleracea var. capitata (Cabbage).